Here is a 199-residue protein sequence, read N- to C-terminus: Transgelin-2 (199 aa).

Residue alanine 2 is modified to N-acetylalanine. Serine 11 carries the post-translational modification Phosphoserine. N6-acetyllysine occurs at positions 17 and 20. In terms of domain architecture, Calponin-homology (CH) spans 24-136 (ADLEQILIQW…RTLMNLGGLA (113 aa)). Residue serine 163 is modified to Phosphoserine. Lysine 171 is covalently cross-linked (Glycyl lysine isopeptide (Lys-Gly) (interchain with G-Cter in SUMO2)). The stretch at 174 to 199 (IGLQMGTNRGASQAGMTGYGMPRQIL) is one Calponin-like repeat. Threonine 180 carries the post-translational modification Phosphothreonine. 2 positions are modified to omega-N-methylarginine: arginine 182 and arginine 196.

It belongs to the calponin family.

This Mus musculus (Mouse) protein is Transgelin-2 (Tagln2).